The following is a 1228-amino-acid chain: DNA-directed RNA polymerase subunit beta'' (1228 aa).

Residues Cys222, Cys296, Cys303, and Cys306 each coordinate Zn(2+).

The protein belongs to the RNA polymerase beta' chain family. RpoC2 subfamily. In terms of assembly, in plastids the minimal PEP RNA polymerase catalytic core is composed of four subunits: alpha, beta, beta', and beta''. When a (nuclear-encoded) sigma factor is associated with the core the holoenzyme is formed, which can initiate transcription. Zn(2+) serves as cofactor.

The protein resides in the plastid. It localises to the chloroplast. It carries out the reaction RNA(n) + a ribonucleoside 5'-triphosphate = RNA(n+1) + diphosphate. Its function is as follows. DNA-dependent RNA polymerase catalyzes the transcription of DNA into RNA using the four ribonucleoside triphosphates as substrates. The polypeptide is DNA-directed RNA polymerase subunit beta'' (Gracilaria tenuistipitata var. liui (Red alga)).